Reading from the N-terminus, the 891-residue chain is Longitudinals lacking protein, isoform G (891 aa).

A BTB domain is found at 32–97 (VDCTLAAEGK…MYRGEVNISQ (66 aa)). Disordered stretches follow at residues 115-200 (LSDN…SSVL) and 228-340 (SSGP…ASAS). Residue serine 140 is modified to Phosphoserine. At threonine 161 the chain carries Phosphothreonine. Residues serine 162 and serine 168 each carry the phosphoserine modification. Composition is skewed to low complexity over residues 162-175 (SGDV…SSSP), 228-251 (SSGP…LTST), 263-293 (TSST…QTTS), and 329-340 (NSATGPNPASAS). A phosphoserine mark is found at serine 372, serine 375, and serine 378. The segment at 446–467 (QDAQQRDPQDLSRKENTAPDVA) is disordered. The segment covering 449–462 (QQRDPQDLSRKENT) has biased composition (basic and acidic residues). 2 positions are modified to phosphoserine: serine 696 and serine 705. A Phosphothreonine modification is found at threonine 706. Phosphoserine occurs at positions 749 and 750. The C2H2-type 1; degenerate zinc finger occupies 791 to 813 (YECRHCGKKYRWKSTLRRHENVE). The C2H2-type 2 zinc finger occupies 821–843 (HQCPYCPYKSKQRGNLGVHVRKH). Residues 840-891 (VRKHHTDLPQLPSKRRSKYSMNRENGMSGSMSDDSQGKLIIDFNGKGELETK) form a disordered region. At serine 874 the chain carries Phosphoserine.

As to expression, expressed in both mesoderm and ectoderm with expression highest in the mesectoderm by stage 11. Becomes enriched in a cluster of brain cells, in abdominal histoblasts, and in the embryonic imaginal disks during later stages.

The protein localises to the nucleus. Its function is as follows. Putative transcription factor required for axon growth and guidance in the central and peripheral nervous systems. Repels CNS axons away from the midline by promoting the expression of the midline repellent sli and its receptor robo. The sequence is that of Longitudinals lacking protein, isoform G from Drosophila melanogaster (Fruit fly).